We begin with the raw amino-acid sequence, 432 residues long: Amino-acid acetyltransferase (432 aa).

The N-acetyltransferase domain occupies 286–425 (EVVREASIED…ASLYNYQRNS (140 aa)).

Belongs to the acetyltransferase family. ArgA subfamily.

Its subcellular location is the cytoplasm. The catalysed reaction is L-glutamate + acetyl-CoA = N-acetyl-L-glutamate + CoA + H(+). Its pathway is amino-acid biosynthesis; L-arginine biosynthesis; N(2)-acetyl-L-ornithine from L-glutamate: step 1/4. The sequence is that of Amino-acid acetyltransferase from Pseudomonas putida (strain GB-1).